Here is a 267-residue protein sequence, read N- to C-terminus: Thymidylate synthase (267 aa).

Arginine 24 is a binding site for dUMP. Histidine 54 is a (6R)-5,10-methylene-5,6,7,8-tetrahydrofolate binding site. 129–130 contributes to the dUMP binding site; the sequence is RR. The Nucleophile role is filled by cysteine 149. DUMP-binding positions include 169–172, asparagine 180, and 210–212; these read RSAD and HIY. Aspartate 172 is a (6R)-5,10-methylene-5,6,7,8-tetrahydrofolate binding site. Alanine 266 provides a ligand contact to (6R)-5,10-methylene-5,6,7,8-tetrahydrofolate.

This sequence belongs to the thymidylate synthase family. Bacterial-type ThyA subfamily. In terms of assembly, homodimer.

Its subcellular location is the cytoplasm. The catalysed reaction is dUMP + (6R)-5,10-methylene-5,6,7,8-tetrahydrofolate = 7,8-dihydrofolate + dTMP. It participates in pyrimidine metabolism; dTTP biosynthesis. Functionally, catalyzes the reductive methylation of 2'-deoxyuridine-5'-monophosphate (dUMP) to 2'-deoxythymidine-5'-monophosphate (dTMP) while utilizing 5,10-methylenetetrahydrofolate (mTHF) as the methyl donor and reductant in the reaction, yielding dihydrofolate (DHF) as a by-product. This enzymatic reaction provides an intracellular de novo source of dTMP, an essential precursor for DNA biosynthesis. The protein is Thymidylate synthase of Arthrobacter sp. (strain FB24).